The chain runs to 594 residues: Cationic amino acid transporter 1 (594 aa).

Ala2 bears the N-acetylalanine mark. Residues 2 to 78 (ASGGGDDGLR…EMKKTLTWWD (77 aa)) lie on the Cytoplasmic side of the membrane. Residues 79–99 (LMWFGIGAVIGSGIFVLTGLE) form a helical membrane-spanning segment. Residues 100–104 (ARNHS) lie on the Extracellular side of the membrane. A glycan (N-linked (GlcNAc...) asparagine) is linked at Asn102. A helical transmembrane segment spans residues 105–125 (GPAVVLSYVVSGVSAMLSVFC). The Cytoplasmic portion of the chain corresponds to 126 to 149 (YTEFAVEIPVAGGSFAYLRVELGD). A helical membrane pass occupies residues 150–170 (FMAFIAAGNIILEYVVGGAAV). The Extracellular segment spans residues 171 to 201 (ARSWTSYFATLLNHKPEDFRIIVHKLGEDYS). The helical transmembrane segment at 202–222 (HLDPIAVGVCAIICVLAVVGT) threads the bilayer. Topologically, residues 223–227 (KGSSR) are cytoplasmic. A helical transmembrane segment spans residues 228 to 248 (FNYIASIIHMVVILFVIIAGF). The Extracellular segment spans residues 249 to 266 (TKADVKNYSDFTPYGVRG). An N-linked (GlcNAc...) asparagine glycan is attached at Asn255. Residues 267 to 287 (VFKSAAVLFFAYIGFDAVSTM) traverse the membrane as a helical segment. Residues 288–297 (AEETKNPGRD) are Cytoplasmic-facing. The helical transmembrane segment at 298–318 (IPIGLVGSMVVTTVCYCLMAV) threads the bilayer. Residues 319 to 348 (TLCLMQPYQQIDPDAPFSVAFSAVGWDWAK) are Extracellular-facing. Residues 349–369 (YIVAFGALKGMTTVLLVGAIG) traverse the membrane as a helical segment. The Cytoplasmic segment spans residues 370-393 (QARYMTHIARAHMMPPWLAQVNAK). Residues 394 to 414 (TGTPINATVVMLAATALIAFF) traverse the membrane as a helical segment. Residues 415–418 (TKLK) lie on the Extracellular side of the membrane. Residues 419 to 439 (ILADLLSVSTLFIFMFVAVAL) form a helical membrane-spanning segment. The Cytoplasmic segment spans residues 440-457 (LVRRYYVTGETSTRDRNK). A helical transmembrane segment spans residues 458–478 (FLVFLGLILASSTATAVYWAL). Topologically, residues 479–483 (EEEGW) are extracellular. Residues 484–504 (IGYCITVPIWFLSTVAMKFLV) form a helical membrane-spanning segment. The Cytoplasmic segment spans residues 505-511 (PQARAPK). Residues 512–532 (IWGVPLVPWLPSASIAINIFL) form a helical membrane-spanning segment. The Extracellular segment spans residues 533–543 (LGSIDTKSFVR). The helical transmembrane segment at 544-564 (FAIWTGILLIYYVLFGLHATY) threads the bilayer. Over 565-594 (DTAKATLKEKQALQKAEEGGVVADNSCSAT) the chain is Cytoplasmic.

The protein belongs to the amino acid-polyamine-organocation (APC) superfamily. Cationic amino acid transporter (CAT) (TC 2.A.3.3) family. Expressed in roots, stems, flowers, petioles, seeds, siliques, and leaves. Mostly present in major veins.

The protein resides in the membrane. Its activity is regulated as follows. Inhibited by the protonophore 2,4-dinitrophenol. Functionally, high-affinity permease involved in the transport of the cationic amino acids (e.g. arginine, lysine, histidine, citrulline, valine, and glutamate). Transport mostly basic amino acids, and, to a lower extent neutral and acidic amino acids. May function as a proton symporter. This chain is Cationic amino acid transporter 1 (CAT1), found in Arabidopsis thaliana (Mouse-ear cress).